The primary structure comprises 217 residues: Octanoyltransferase (217 aa).

A BPL/LPL catalytic domain is found at 32 to 207 (SESHDELWIV…TFSQLLGYQH (176 aa)). Residues 71–78 (RGGQVTYH), 138–140 (SLG), and 151–153 (GLA) each bind substrate. Catalysis depends on cysteine 169, which acts as the Acyl-thioester intermediate.

Belongs to the LipB family.

The protein localises to the cytoplasm. It catalyses the reaction octanoyl-[ACP] + L-lysyl-[protein] = N(6)-octanoyl-L-lysyl-[protein] + holo-[ACP] + H(+). The protein operates within protein modification; protein lipoylation via endogenous pathway; protein N(6)-(lipoyl)lysine from octanoyl-[acyl-carrier-protein]: step 1/2. Catalyzes the transfer of endogenously produced octanoic acid from octanoyl-acyl-carrier-protein onto the lipoyl domains of lipoate-dependent enzymes. Lipoyl-ACP can also act as a substrate although octanoyl-ACP is likely to be the physiological substrate. This is Octanoyltransferase from Shewanella baltica (strain OS155 / ATCC BAA-1091).